The following is a 220-amino-acid chain: Ribonuclease HII (220 aa).

Positions 32–220 (KHIVGIDEAG…FAPIKGRYSV (189 aa)) constitute an RNase H type-2 domain. Residues D38, E39, and D130 each coordinate a divalent metal cation.

The protein belongs to the RNase HII family. Mn(2+) is required as a cofactor. Requires Mg(2+) as cofactor.

Its subcellular location is the cytoplasm. The catalysed reaction is Endonucleolytic cleavage to 5'-phosphomonoester.. In terms of biological role, endonuclease that specifically degrades the RNA of RNA-DNA hybrids. The sequence is that of Ribonuclease HII from Brucella anthropi (strain ATCC 49188 / DSM 6882 / CCUG 24695 / JCM 21032 / LMG 3331 / NBRC 15819 / NCTC 12168 / Alc 37) (Ochrobactrum anthropi).